The chain runs to 55 residues: Beta-toxin Cn7 (55 aa).

One can recognise an LCN-type CS-alpha/beta domain in the interval 1 to 55 (KEGYIVNYHDGCKYECYKLGDNDYCLRECKLRVGKGAGGYCYAFACWCTHLYEQA). 3 disulfide bridges follow: C16/C41, C25/C46, and C29/C48.

The protein belongs to the long (3 C-C) scorpion toxin superfamily. Sodium channel inhibitor family. Beta subfamily. As to expression, expressed by the venom gland.

It is found in the secreted. Functionally, beta toxins bind voltage-independently at site-4 of sodium channels (Nav) and shift the voltage of activation toward more negative potentials thereby affecting sodium channel activation and promoting spontaneous and repetitive firing. This Centruroides noxius (Mexican scorpion) protein is Beta-toxin Cn7.